The primary structure comprises 227 residues: Phosphatidylserine decarboxylase proenzyme (227 aa).

Catalysis depends on Ser169, which acts as the Schiff-base intermediate with substrate; via pyruvic acid. Ser169 is modified (pyruvic acid (Ser); by autocatalysis). Residues 197–227 form a disordered region; that stretch reads GRIPTPESGRSSSAEATAAPSASSARRSSAS. Over residues 206–227 the composition is skewed to low complexity; sequence RSSSAEATAAPSASSARRSSAS.

This sequence belongs to the phosphatidylserine decarboxylase family. PSD-A subfamily. As to quaternary structure, heterodimer of a large membrane-associated beta subunit and a small pyruvoyl-containing alpha subunit. Pyruvate is required as a cofactor. Is synthesized initially as an inactive proenzyme. Formation of the active enzyme involves a self-maturation process in which the active site pyruvoyl group is generated from an internal serine residue via an autocatalytic post-translational modification. Two non-identical subunits are generated from the proenzyme in this reaction, and the pyruvate is formed at the N-terminus of the alpha chain, which is derived from the carboxyl end of the proenzyme. The post-translation cleavage follows an unusual pathway, termed non-hydrolytic serinolysis, in which the side chain hydroxyl group of the serine supplies its oxygen atom to form the C-terminus of the beta chain, while the remainder of the serine residue undergoes an oxidative deamination to produce ammonia and the pyruvoyl prosthetic group on the alpha chain.

Its subcellular location is the cell membrane. It carries out the reaction a 1,2-diacyl-sn-glycero-3-phospho-L-serine + H(+) = a 1,2-diacyl-sn-glycero-3-phosphoethanolamine + CO2. It functions in the pathway phospholipid metabolism; phosphatidylethanolamine biosynthesis; phosphatidylethanolamine from CDP-diacylglycerol: step 2/2. Catalyzes the formation of phosphatidylethanolamine (PtdEtn) from phosphatidylserine (PtdSer). The chain is Phosphatidylserine decarboxylase proenzyme from Salinibacter ruber (strain DSM 13855 / M31).